The sequence spans 136 residues: Endonuclease II (136 aa).

Residues 32–131 form the GIY-YIG domain; that stretch reads KYNVIYAIAI…IKLFNPPWNI (100 aa).

Homotetramer. It depends on Mg(2+) as a cofactor.

The catalysed reaction is Endonucleolytic nicking and cleavage of cytosine-containing double-stranded DNA.. Its function is as follows. Contributes to the degradation of host DNA, permitting the scavenging of host-derived nucleotides for phage DNA synthesis. Sequence-specific endonuclease. Catalyzes nicking of the bottom strand of double-stranded DNA between the first and second base pair to the right of a top-strand CCGC motif. Does not cleave native phage DNA, which contains 5-hydroxymethylcytosine instead of cytosine. In Escherichia coli (Bacteriophage T4), this protein is Endonuclease II (denA).